The sequence spans 122 residues: Large ribosomal subunit protein uL14 (122 aa).

The protein belongs to the universal ribosomal protein uL14 family. As to quaternary structure, part of the 50S ribosomal subunit. Forms a cluster with proteins L3 and L19. In the 70S ribosome, L14 and L19 interact and together make contacts with the 16S rRNA in bridges B5 and B8.

In terms of biological role, binds to 23S rRNA. Forms part of two intersubunit bridges in the 70S ribosome. This is Large ribosomal subunit protein uL14 from Pseudomonas savastanoi pv. phaseolicola (strain 1448A / Race 6) (Pseudomonas syringae pv. phaseolicola (strain 1448A / Race 6)).